The primary structure comprises 272 residues: HMP-PP phosphatase (272 aa).

The active-site Nucleophile is the aspartate 8. Residues aspartate 8, aspartate 10, and aspartate 212 each contribute to the Mg(2+) site.

Belongs to the HAD-like hydrolase superfamily. Cof family. The cofactor is Mg(2+).

It carries out the reaction 4-amino-2-methyl-5-(diphosphooxymethyl)pyrimidine + H2O = 4-amino-2-methyl-5-(phosphooxymethyl)pyrimidine + phosphate + H(+). In terms of biological role, catalyzes the hydrolysis of 4-amino-2-methyl-5-hydroxymethylpyrimidine pyrophosphate (HMP-PP) to 4-amino-2-methyl-5-hydroxymethylpyrimidine phosphate (HMP-P). This chain is HMP-PP phosphatase, found in Escherichia coli (strain UTI89 / UPEC).